Consider the following 204-residue polypeptide: MKVSSAEFVTSGTRPAHYPPPELPEVAFAGRSNVGKSSLINVLVNRKGLVRTSSTPGRTQLINFFRVNGSLMLVDLPGYGFAKVPLAVKKEWGPMVETYLSTRPNLSCVVLIVDIRREPTEEDQLMLQWLRAYNVAVLVVVTKCDKVSKNERAKQAAIITRTLGLARDEMAFFSALSKEGRDEVWARIEVMLAAGQEEAEESGE.

A disordered region spans residues 1–21 (MKVSSAEFVTSGTRPAHYPPP). In terms of domain architecture, EngB-type G spans 22–194 (ELPEVAFAGR…WARIEVMLAA (173 aa)). Residues 30–37 (GRSNVGKS), 57–61 (GRTQL), 75–78 (DLPG), 142–145 (TKCD), and 173–175 (FSA) contribute to the GTP site. Residues serine 37 and threonine 59 each coordinate Mg(2+).

This sequence belongs to the TRAFAC class TrmE-Era-EngA-EngB-Septin-like GTPase superfamily. EngB GTPase family. The cofactor is Mg(2+).

Its function is as follows. Necessary for normal cell division and for the maintenance of normal septation. In Geobacter metallireducens (strain ATCC 53774 / DSM 7210 / GS-15), this protein is Probable GTP-binding protein EngB.